Here is a 134-residue protein sequence, read N- to C-terminus: UPF0412 protein YaaI (134 aa).

The signal sequence occupies residues 1–23 (MKSVFTLSASLAISLLLCCTAQA).

This sequence belongs to the UPF0412 family.

The protein is UPF0412 protein YaaI of Escherichia coli O7:K1 (strain IAI39 / ExPEC).